Here is a 130-residue protein sequence, read N- to C-terminus: Small ribosomal subunit protein uS8 (130 aa).

This sequence belongs to the universal ribosomal protein uS8 family. In terms of assembly, part of the 30S ribosomal subunit. Contacts proteins S5 and S12.

One of the primary rRNA binding proteins, it binds directly to 16S rRNA central domain where it helps coordinate assembly of the platform of the 30S subunit. In Shewanella baltica (strain OS223), this protein is Small ribosomal subunit protein uS8.